We begin with the raw amino-acid sequence, 106 residues long: Immunoglobulin lambda constant 3 (106 aa).

Positions 7–101 (PSVTLFPPSS…EGSTVEKTVA (95 aa)) constitute an Ig-like domain. An intrachain disulfide couples Cys28 to Cys87.

As to quaternary structure, immunoglobulins are composed of two identical heavy chains and two identical light chains; disulfide-linked.

It localises to the secreted. It is found in the cell membrane. Its function is as follows. Constant region of immunoglobulin light chains. Immunoglobulins, also known as antibodies, are membrane-bound or secreted glycoproteins produced by B lymphocytes. In the recognition phase of humoral immunity, the membrane-bound immunoglobulins serve as receptors which, upon binding of a specific antigen, trigger the clonal expansion and differentiation of B lymphocytes into immunoglobulins-secreting plasma cells. Secreted immunoglobulins mediate the effector phase of humoral immunity, which results in the elimination of bound antigens. The antigen binding site is formed by the variable domain of one heavy chain, together with that of its associated light chain. Thus, each immunoglobulin has two antigen binding sites with remarkable affinity for a particular antigen. The variable domains are assembled by a process called V-(D)-J rearrangement and can then be subjected to somatic hypermutations which, after exposure to antigen and selection, allow affinity maturation for a particular antigen. The chain is Immunoglobulin lambda constant 3 from Homo sapiens (Human).